Reading from the N-terminus, the 236-residue chain is UPF0280 protein Mlab_0453 (236 aa).

It belongs to the UPF0280 family.

The protein is UPF0280 protein Mlab_0453 of Methanocorpusculum labreanum (strain ATCC 43576 / DSM 4855 / Z).